The following is a 490-amino-acid chain: Cytochrome P450 2C55 (490 aa).

C435 serves as a coordination point for heme.

Belongs to the cytochrome P450 family. Heme is required as a cofactor.

It is found in the endoplasmic reticulum membrane. It localises to the microsome membrane. It carries out the reaction an organic molecule + reduced [NADPH--hemoprotein reductase] + O2 = an alcohol + oxidized [NADPH--hemoprotein reductase] + H2O + H(+). Metabolizes arachidonic acid mainly to 19-hydroxyeicosatetraenoic acid (HETE). This is Cytochrome P450 2C55 (Cyp2c55) from Rattus norvegicus (Rat).